The following is a 239-amino-acid chain: MSEVTTNEYNEDGKLIRKIRSFVRREGRLTKGQENAMNECWPTMGIDYKAELLDWKEVFGNDNPVVLEIGFGMGASLVEMAKNAPEKNFFGIEVHSPGVGACLSDAREAGITNLRVMCHDAVEVFEHMIPNDSLATLQLFFPDPWHKKRHHKRRIVQLEFAEMVRQKLIPNEGIFHMATDWENYAEHMIEIMNQAPGFENIAQDGDFVPRPEDRPLTKFEARGHRLGHGVWDIKYKRIA.

S-adenosyl-L-methionine contacts are provided by Glu68, Glu93, Asp120, and Asp143. Asp143 is an active-site residue. Substrate-binding positions include Lys147, Asp180, and Thr217–Glu220.

This sequence belongs to the class I-like SAM-binding methyltransferase superfamily. TrmB family.

It carries out the reaction guanosine(46) in tRNA + S-adenosyl-L-methionine = N(7)-methylguanosine(46) in tRNA + S-adenosyl-L-homocysteine. The protein operates within tRNA modification; N(7)-methylguanine-tRNA biosynthesis. Catalyzes the formation of N(7)-methylguanine at position 46 (m7G46) in tRNA. This is tRNA (guanine-N(7)-)-methyltransferase from Vibrio parahaemolyticus serotype O3:K6 (strain RIMD 2210633).